A 246-amino-acid polypeptide reads, in one-letter code: Chalcone--flavanone isomerase 1 (246 aa).

Substrate is bound by residues T59, N124, and S201.

This sequence belongs to the chalcone isomerase family. Mostly expressed in siliques and flowers, and, to a lower extent, in leaves.

The enzyme catalyses a chalcone = a flavanone.. It participates in secondary metabolite biosynthesis; flavonoid biosynthesis. Catalyzes the intramolecular cyclization of bicyclic chalcones into tricyclic (S)-flavanones. Responsible for the isomerization of 4,2',4',6'-tetrahydroxychalcone (also termed chalcone) into naringenin. This chain is Chalcone--flavanone isomerase 1 (CHI1), found in Arabidopsis thaliana (Mouse-ear cress).